A 66-amino-acid polypeptide reads, in one-letter code: ATP synthase protein 8 (66 aa).

Residues 8-24 form a helical membrane-spanning segment; sequence PWPMVIMSMILTLFYIT. Lys-54 bears the N6-acetyllysine; alternate mark. Residue Lys-54 is modified to N6-succinyllysine; alternate. The residue at position 57 (Lys-57) is an N6-acetyllysine.

The protein belongs to the ATPase protein 8 family. As to quaternary structure, F-type ATPases have 2 components, CF(1) - the catalytic core - and CF(0) - the membrane proton channel. Component of an ATP synthase complex composed of ATP5PB, ATP5MC1, ATP5F1E, ATP5PD, ATP5ME, ATP5PF, ATP5MF, MT-ATP6, MT-ATP8, ATP5F1A, ATP5F1B, ATP5F1D, ATP5F1C, ATP5PO, ATP5MG, ATP5MK and ATP5MJ. Interacts with PRICKLE3.

It localises to the mitochondrion membrane. Mitochondrial membrane ATP synthase (F(1)F(0) ATP synthase or Complex V) produces ATP from ADP in the presence of a proton gradient across the membrane which is generated by electron transport complexes of the respiratory chain. F-type ATPases consist of two structural domains, F(1) - containing the extramembraneous catalytic core and F(0) - containing the membrane proton channel, linked together by a central stalk and a peripheral stalk. During catalysis, ATP synthesis in the catalytic domain of F(1) is coupled via a rotary mechanism of the central stalk subunits to proton translocation. Part of the complex F(0) domain. Minor subunit located with subunit a in the membrane. This chain is ATP synthase protein 8 (MT-ATP8), found in Alouatta guariba (Brown howler monkey).